Consider the following 667-residue polypeptide: Probable potassium transport system protein Kup (667 aa).

12 helical membrane-spanning segments follow: residues 16 to 36, 58 to 78, 101 to 121, 146 to 166, 167 to 187, 221 to 241, 253 to 273, 294 to 314, 343 to 363, 373 to 393, 399 to 419, and 431 to 451; these read GFII…LYTM, VSLI…LIAL, WLII…ALTP, TNVI…QRFG, TGVI…VLGI, IFIL…YSDL, WPFV…WILA, VYLV…LISG, LYIP…VLYF, YGLA…YYLI, PLLA…FFLA, and VVVL…GTVI.

It belongs to the HAK/KUP transporter (TC 2.A.72) family.

It is found in the cell membrane. It catalyses the reaction K(+)(in) + H(+)(in) = K(+)(out) + H(+)(out). Its function is as follows. Transport of potassium into the cell. Likely operates as a K(+):H(+) symporter. This chain is Probable potassium transport system protein Kup, found in Streptococcus equi subsp. zooepidemicus (strain MGCS10565).